The following is a 127-amino-acid chain: Aspartate 1-decarboxylase (127 aa).

Serine 25 acts as the Schiff-base intermediate with substrate; via pyruvic acid in catalysis. Serine 25 is modified (pyruvic acid (Ser)). A substrate-binding site is contributed by threonine 57. Residue tyrosine 58 is the Proton donor of the active site. 73–75 provides a ligand contact to substrate; that stretch reads GAA.

It belongs to the PanD family. Heterooctamer of four alpha and four beta subunits. Pyruvate is required as a cofactor. Is synthesized initially as an inactive proenzyme, which is activated by self-cleavage at a specific serine bond to produce a beta-subunit with a hydroxyl group at its C-terminus and an alpha-subunit with a pyruvoyl group at its N-terminus.

The protein resides in the cytoplasm. The enzyme catalyses L-aspartate + H(+) = beta-alanine + CO2. It participates in cofactor biosynthesis; (R)-pantothenate biosynthesis; beta-alanine from L-aspartate: step 1/1. In terms of biological role, catalyzes the pyruvoyl-dependent decarboxylation of aspartate to produce beta-alanine. This Staphylococcus aureus (strain bovine RF122 / ET3-1) protein is Aspartate 1-decarboxylase.